Reading from the N-terminus, the 176-residue chain is Peptidyl-tRNA hydrolase (176 aa).

A tRNA-binding site is contributed by Tyr14. His19 acts as the Proton acceptor in catalysis. The tRNA site is built by Tyr65, Asn67, and Asn113.

It belongs to the PTH family. As to quaternary structure, monomer.

Its subcellular location is the cytoplasm. It carries out the reaction an N-acyl-L-alpha-aminoacyl-tRNA + H2O = an N-acyl-L-amino acid + a tRNA + H(+). In terms of biological role, hydrolyzes ribosome-free peptidyl-tRNAs (with 1 or more amino acids incorporated), which drop off the ribosome during protein synthesis, or as a result of ribosome stalling. Its function is as follows. Catalyzes the release of premature peptidyl moieties from peptidyl-tRNA molecules trapped in stalled 50S ribosomal subunits, and thus maintains levels of free tRNAs and 50S ribosomes. This is Peptidyl-tRNA hydrolase from Phytoplasma mali (strain AT).